Consider the following 137-residue polypeptide: Large ribosomal subunit protein uL16 (137 aa).

The interval 1 to 22 (MLQPKRTKFRKQQKGRNRGLAH) is disordered.

Belongs to the universal ribosomal protein uL16 family. Part of the 50S ribosomal subunit.

Binds 23S rRNA and is also seen to make contacts with the A and possibly P site tRNAs. This is Large ribosomal subunit protein uL16 from Saccharophagus degradans (strain 2-40 / ATCC 43961 / DSM 17024).